We begin with the raw amino-acid sequence, 32 residues long: Periplasmic [NiFeSe] hydrogenase small subunit (32 aa).

[4Fe-4S] cluster is bound by residues Cys18 and Cys21.

The protein belongs to the [NiFe]/[NiFeSe] hydrogenase small subunit family. Heterodimer of a large and a small subunit. [3Fe-4S] cluster is required as a cofactor. It depends on [4Fe-4S] cluster as a cofactor.

Its subcellular location is the periplasm. The enzyme catalyses H2 + A = AH2. In Desulfomicrobium norvegicum (strain DSM 1741 / NCIMB 8310) (Desulfovibrio baculatus (strain Norway 4)), this protein is Periplasmic [NiFeSe] hydrogenase small subunit.